The chain runs to 511 residues: Protein phosphatase 2C 7 (511 aa).

The first 19 residues, Met-1–Cys-19, serve as a signal peptide directing secretion. One can recognise a PPM-type phosphatase domain in the interval Leu-188–Leu-501. Mn(2+) is bound by residues Asp-242, Gly-243, Asp-432, and Asp-492.

It belongs to the PP2C family. Interacts with PYL13. Requires Mg(2+) as cofactor. Mn(2+) is required as a cofactor. As to expression, expressed in seeds.

It catalyses the reaction O-phospho-L-seryl-[protein] + H2O = L-seryl-[protein] + phosphate. The enzyme catalyses O-phospho-L-threonyl-[protein] + H2O = L-threonyl-[protein] + phosphate. Functionally, key component and repressor of the abscisic acid (ABA) signaling pathway that regulates numerous ABA responses, such as stomatal closure, seed germination and inhibition of vegetative growth. The chain is Protein phosphatase 2C 7 (HAB2) from Arabidopsis thaliana (Mouse-ear cress).